The chain runs to 318 residues: Ribosomal protein L11 methyltransferase (318 aa).

Threonine 161, glycine 182, aspartate 204, and asparagine 247 together coordinate S-adenosyl-L-methionine.

The protein belongs to the methyltransferase superfamily. PrmA family.

The protein resides in the cytoplasm. It carries out the reaction L-lysyl-[protein] + 3 S-adenosyl-L-methionine = N(6),N(6),N(6)-trimethyl-L-lysyl-[protein] + 3 S-adenosyl-L-homocysteine + 3 H(+). Methylates ribosomal protein L11. The sequence is that of Ribosomal protein L11 methyltransferase from Moorella thermoacetica (strain ATCC 39073 / JCM 9320).